Reading from the N-terminus, the 130-residue chain is Methylglyoxal synthase (130 aa).

The MGS-like domain occupies 1 to 130; sequence MSTPRIALIA…DLARRLTANA (130 aa). Residues His-11, Lys-15, 37-40, and 57-58 contribute to the substrate site; these read TGTT and SG. The active-site Proton donor/acceptor is Asp-63. His-90 contacts substrate.

This sequence belongs to the methylglyoxal synthase family.

It carries out the reaction dihydroxyacetone phosphate = methylglyoxal + phosphate. In terms of biological role, catalyzes the formation of methylglyoxal from dihydroxyacetone phosphate. The polypeptide is Methylglyoxal synthase (Burkholderia mallei (strain NCTC 10247)).